Consider the following 382-residue polypeptide: Serine/threonine-protein phosphatase 2A activator 2 (382 aa).

Residues 363 to 382 (SHKGVPTLGNRPGIKPIPFD) are disordered.

It belongs to the PTPA-type PPIase family.

It is found in the cytoplasm. The enzyme catalyses [protein]-peptidylproline (omega=180) = [protein]-peptidylproline (omega=0). In terms of biological role, PPIases accelerate the folding of proteins. It catalyzes the cis-trans isomerization of proline imidic peptide bonds in oligopeptides. Acts as a regulatory subunit for PP2A-like phosphatases modulating their activity or substrate specificity, probably by inducing a conformational change in the catalytic subunit, a direct target of the PPIase. Can reactivate inactive phosphatase PP2A-phosphatase methylesterase complexes (PP2Ai) in presence of ATP and Mg(2+) by dissociating the inactive form from the complex. This is Serine/threonine-protein phosphatase 2A activator 2 (RRD2) from Cryptococcus neoformans var. neoformans serotype D (strain B-3501A) (Filobasidiella neoformans).